The chain runs to 890 residues: Translation initiation factor IF-2 (890 aa).

The disordered stretch occupies residues 45-303 (LIDHLNQKNS…SLQQGFQKPA (259 aa)). The segment covering 67–81 (STLNIPGTGGKSKSV) has biased composition (polar residues). Over residues 92-217 (VKRDPQEAER…RMAEENKWTD (126 aa)) the composition is skewed to basic and acidic residues. A compositionally biased stretch (basic residues) spans 252-266 (GRGRNAKAARPKKGN). The span at 267–280 (KHAESKADREEARA) shows a compositional bias: basic and acidic residues. In terms of domain architecture, tr-type G spans 389 to 558 (PRAPVVTIMG…LLQAEVLELK (170 aa)). The interval 398-405 (GHVDHGKT) is G1. 398-405 (GHVDHGKT) provides a ligand contact to GTP. The interval 423 to 427 (GITQH) is G2. Positions 444–447 (DTPG) are G3. Residues 444–448 (DTPGH) and 498–501 (NKID) contribute to the GTP site. Residues 498-501 (NKID) are G4. The G5 stretch occupies residues 534–536 (SAK). Position 808 is an N6-acetyllysine (Lys-808).

The protein belongs to the TRAFAC class translation factor GTPase superfamily. Classic translation factor GTPase family. IF-2 subfamily.

It localises to the cytoplasm. Its function is as follows. One of the essential components for the initiation of protein synthesis. Protects formylmethionyl-tRNA from spontaneous hydrolysis and promotes its binding to the 30S ribosomal subunits. Also involved in the hydrolysis of GTP during the formation of the 70S ribosomal complex. The sequence is that of Translation initiation factor IF-2 from Shigella boydii serotype 18 (strain CDC 3083-94 / BS512).